The sequence spans 500 residues: Endonuclease domain-containing 1 protein (500 aa).

The first 21 residues, 1 to 21 (MGTARWLALGSLFALAGLLEG), serve as a signal peptide directing secretion. Residues 293 to 323 (ERMVQSQKSSSPLSSTRSKRSTLLPPEASEG) form a disordered region. Low complexity predominate over residues 297–317 (QSQKSSSPLSSTRSKRSTLLP). An N6-acetyllysine modification is found at lysine 407.

It belongs to the DNA/RNA non-specific endonuclease family. As to quaternary structure, interacts with RNF26; this interaction is important to modulate innate immune signaling through the cGAS-STING pathway.

The protein resides in the secreted. Its function is as follows. May act as a DNase and a RNase. Plays a role in the modulation of innate immune signaling through the cGAS-STING pathway by interacting with RNF26. This chain is Endonuclease domain-containing 1 protein (ENDOD1), found in Homo sapiens (Human).